The chain runs to 103 residues: MISVPIEYYLVVAAVLFLIGSIGFLLRRNLLVLLMSIELMLNAVNLTLVAYNRVHPHDHAGQIFTFFVIAIAAAEAAVGLAIVLAFYRIRKTMRSDDADLLRS.

The next 3 membrane-spanning stretches (helical) occupy residues 6–26 (IEYY…GFLL), 30–50 (LLVL…TLVA), and 66–86 (FFVI…VLAF).

This sequence belongs to the complex I subunit 4L family. In terms of assembly, NDH-1 is composed of 14 different subunits. Subunits NuoA, H, J, K, L, M, N constitute the membrane sector of the complex.

The protein resides in the cell inner membrane. The enzyme catalyses a quinone + NADH + 5 H(+)(in) = a quinol + NAD(+) + 4 H(+)(out). NDH-1 shuttles electrons from NADH, via FMN and iron-sulfur (Fe-S) centers, to quinones in the respiratory chain. The immediate electron acceptor for the enzyme in this species is believed to be ubiquinone. Couples the redox reaction to proton translocation (for every two electrons transferred, four hydrogen ions are translocated across the cytoplasmic membrane), and thus conserves the redox energy in a proton gradient. This chain is NADH-quinone oxidoreductase subunit K, found in Sorangium cellulosum (strain So ce56) (Polyangium cellulosum (strain So ce56)).